A 202-amino-acid chain; its full sequence is LexA repressor (202 aa).

The segment at residues 28 to 48 (RAEIAQRLGFRSPNAAEEHLK) is a DNA-binding region (H-T-H motif). Catalysis depends on for autocatalytic cleavage activity residues S119 and K156.

This sequence belongs to the peptidase S24 family. Homodimer.

It carries out the reaction Hydrolysis of Ala-|-Gly bond in repressor LexA.. In terms of biological role, represses a number of genes involved in the response to DNA damage (SOS response), including recA and lexA. Binds to the 16 bp palindromic sequence 5'-CTGTATATATATACAG-3'. In the presence of single-stranded DNA, RecA interacts with LexA causing an autocatalytic cleavage which disrupts the DNA-binding part of LexA, leading to derepression of the SOS regulon and eventually DNA repair. This Yersinia pseudotuberculosis serotype O:1b (strain IP 31758) protein is LexA repressor.